Reading from the N-terminus, the 729-residue chain is Rho GTPase-activating protein 28 (729 aa).

Disordered regions lie at residues 20 to 42 (AQPP…LSRK) and 55 to 105 (SNES…AEVT). The segment covering 65–75 (SRSNSEASVDS) has biased composition (polar residues). Ser-72 is modified (phosphoserine). Over residues 80-89 (DFWREIESIK) the composition is skewed to basic and acidic residues. A Phosphothreonine modification is found at Thr-159. A disordered region spans residues 176-236 (GVSESPPRDT…SQDKEGSFAV (61 aa)). Over residues 195–204 (GTKEERELPR) the composition is skewed to basic and acidic residues. Positions 217–226 (SLNSTTLSDA) are enriched in polar residues. In terms of domain architecture, Rho-GAP spans 380 to 577 (VPLTVLLDGD…LMLKYQKILW (198 aa)). The tract at residues 612-631 (TLERETASPKTSKVLQKSPS) is disordered. A compositionally biased stretch (polar residues) spans 619-630 (SPKTSKVLQKSP).

Expressed in testis. Expressed at moderate level in kidney and ovary, and weakly expressed in spleen and skeletal muscle.

Functionally, GTPase activator for the Rho-type GTPases by converting them to an inactive GDP-bound state. The sequence is that of Rho GTPase-activating protein 28 (ARHGAP28) from Homo sapiens (Human).